Reading from the N-terminus, the 191-residue chain is Flagellar transcriptional regulator FlhC (191 aa).

Residues Cys139, Cys142, Cys159, and Cys162 each contribute to the Zn(2+) site.

Belongs to the FlhC family. In terms of assembly, heterohexamer composed of two FlhC and four FlhD subunits. Each FlhC binds a FlhD dimer, forming a heterotrimer, and a hexamer assembles by dimerization of two heterotrimers. It depends on Zn(2+) as a cofactor.

The protein resides in the cytoplasm. Its function is as follows. Functions in complex with FlhD as a master transcriptional regulator that regulates transcription of several flagellar and non-flagellar operons by binding to their promoter region. Activates expression of class 2 flagellar genes, including fliA, which is a flagellum-specific sigma factor that turns on the class 3 genes. Also regulates genes whose products function in a variety of physiological pathways. This is Flagellar transcriptional regulator FlhC from Enterobacter cloacae subsp. cloacae (strain ATCC 13047 / DSM 30054 / NBRC 13535 / NCTC 10005 / WDCM 00083 / NCDC 279-56).